A 242-amino-acid chain; its full sequence is MWDNAEAMERLTRWLLVMMAMLLAASGLVWFYNSNHLPVKQVSLKGNLVYSDKKALGSLAKEYIHGNILRTDINGAQEAYRRYPWIASVMVRRRFPDTVEVVLTERKPVARWGDHALVDGEGNVFEARLDRPGMPVFRGAEGTSAEMLRRYDEFSTVLAKQGLGIKEMTYTARSAWNVVLDNGITVRLGRENEMKRLRLFTEAWQHLLRKNKNRLSYVDMRYKDGFSVRHAPDGLPEKESEE.

At 1–12 (MWDNAEAMERLT) the chain is on the cytoplasmic side. A helical transmembrane segment spans residues 13 to 32 (RWLLVMMAMLLAASGLVWFY). Topologically, residues 33–242 (NSNHLPVKQV…DGLPEKESEE (210 aa)) are periplasmic. The POTRA domain maps to 37–106 (LPVKQVSLKG…DTVEVVLTER (70 aa)).

The protein belongs to the FtsQ/DivIB family. FtsQ subfamily. In terms of assembly, part of a complex composed of FtsB, FtsL and FtsQ.

It localises to the cell inner membrane. Its function is as follows. Essential cell division protein. May link together the upstream cell division proteins, which are predominantly cytoplasmic, with the downstream cell division proteins, which are predominantly periplasmic. May control correct divisome assembly. This is Cell division protein FtsQ from Neisseria gonorrhoeae (strain ATCC 700825 / FA 1090).